The chain runs to 563 residues: Cytochrome P450 monooxygenase efuG (563 aa).

Residues 10-30 form a helical membrane-spanning segment; it reads ITSHQWGIGSVFLLISIPLIV. The interval 462-482 is disordered; that stretch reads PDDPQSGPRKDAKKQKAKSDG. Cys505 contributes to the heme binding site.

Belongs to the cytochrome P450 family. Heme serves as cofactor.

The protein resides in the membrane. It participates in secondary metabolite biosynthesis; terpenoid biosynthesis. In terms of biological role, cytochrome P450 monooxygenase; part of the gene cluster that mediates the biosynthesis of enfumafungin, a glycosylated fernene-type triterpenoid with potent antifungal activity, mediated by its interaction with beta-1,3-glucan synthase and the fungal cell wall. The pathway begins with the terpene cyclase-glycosyl transferase fusion protein that most likely uses 2,3-oxidosqualene as substrate and catalyzes glycosylation immediately after cyclization. The fernene glycoside then could be processed by the desaturase efuI which catalyzes isomerization of a double bond established by efuA to form the core structure. The latter would then undergo a series of hydroxylations in unknown order at C-2, C-19, C-23 and C-25, which would be catalyzed by two of the three cytochrome P450 monooxygenases efuB, efuG or efuH. The hydroxy-group at C-25 becomes oxidized by the dehydrogenase efuE to enable a spontaneous, non-enzymatic hemiacetal formation with C-23. After hydroxylation at C-2, acetylation by the acetyltransferase efuC takes place. The final steps in enfumafungin biosynthesis require expansion of the 5-membered ring by lactonization via a Baeyer-Villiger reaction mediated by one of the BGC's cytochrome P450 monooxygenases (efuB, efuG or efuH) followed by ring cleavage. This type of reaction would establish a double bond between C-20 and C-21 which could be reduced by the reductase efuL to form the final product. This chain is Cytochrome P450 monooxygenase efuG, found in Hormonema carpetanum.